The following is a 223-amino-acid chain: Sigma non-opioid intracellular receptor 1 (223 aa).

Residues 1 to 9 (MQWAVGRRW) lie on the Lumenal side of the membrane. The targeting to endoplasmic reticulum-associated lipid droplets stretch occupies residues 2-8 (QWAVGRR). The helical transmembrane segment at 10 to 30 (AWAALLLAVAAVLTQVVWLWL) threads the bilayer. Topologically, residues 31–223 (GTQSFVFQRE…LTTYLFGQDP (193 aa)) are cytoplasmic. The important for ligand-binding stretch occupies residues 99-106 (SLSEYVLL). The tract at residues 177–223 (VIPSTLAFALADTVFSTQDFLTLFYTLRSYARGLRLELTTYLFGQDP) is C-terminal hydrophobic region.

This sequence belongs to the ERG2 family. In terms of assembly, homotrimer. Forms a ternary complex with ANK2 and ITPR3. The complex is disrupted by agonists. Interacts with KCNA4. Interacts with KCNA2; cocaine consumption leads to increased interaction. Interacts with RNF112 in an oxidative stress-regulated manner. Widely expressed with higher expression in liver, colon, prostate, placenta, small intestine, heart and pancreas. Expressed in the retina by retinal pigment epithelial cells. Expressed in alpha-motor neurons.

The protein localises to the nucleus inner membrane. The protein resides in the nucleus outer membrane. It is found in the nucleus envelope. Its subcellular location is the cytoplasmic vesicle. It localises to the endoplasmic reticulum membrane. The protein localises to the membrane. The protein resides in the lipid droplet. It is found in the cell junction. Its subcellular location is the cell membrane. It localises to the cell projection. The protein localises to the growth cone. The protein resides in the postsynaptic density membrane. Its function is as follows. Functions in lipid transport from the endoplasmic reticulum and is involved in a wide array of cellular functions probably through regulation of the biogenesis of lipid microdomains at the plasma membrane. Involved in the regulation of different receptors it plays a role in BDNF signaling and EGF signaling. Also regulates ion channels like the potassium channel and could modulate neurotransmitter release. Plays a role in calcium signaling through modulation together with ANK2 of the ITP3R-dependent calcium efflux at the endoplasmic reticulum. Plays a role in several other cell functions including proliferation, survival and death. Originally identified for its ability to bind various psychoactive drugs it is involved in learning processes, memory and mood alteration. Necessary for proper mitochondrial axonal transport in motor neurons, in particular the retrograde movement of mitochondria. Plays a role in protecting cells against oxidative stress-induced cell death via its interaction with RNF112. This chain is Sigma non-opioid intracellular receptor 1 (SIGMAR1), found in Homo sapiens (Human).